A 105-amino-acid chain; its full sequence is Heat shock protein HspQ (105 aa).

The segment at 74–105 (SSETQDEHPEQPSMDELARTIRKQLQAPRLRN) is disordered.

The protein belongs to the HspQ family.

It localises to the cytoplasm. Its function is as follows. Involved in the degradation of certain denaturated proteins, including DnaA, during heat shock stress. The sequence is that of Heat shock protein HspQ from Citrobacter koseri (strain ATCC BAA-895 / CDC 4225-83 / SGSC4696).